A 61-amino-acid polypeptide reads, in one-letter code: MGLSGISPLSLLLILAIIVALFGTSKLKTIGSDLGEAIKNFRKAMNSEETNDTQKDDHKPS.

A helical membrane pass occupies residues 2 to 22; it reads GLSGISPLSLLLILAIIVALF.

This sequence belongs to the TatA/E family. The Tat system comprises two distinct complexes: a TatABC complex, containing multiple copies of TatA, TatB and TatC subunits, and a separate TatA complex, containing only TatA subunits. Substrates initially bind to the TatABC complex, which probably triggers association of the separate TatA complex to form the active translocon.

The protein localises to the cell inner membrane. Functionally, part of the twin-arginine translocation (Tat) system that transports large folded proteins containing a characteristic twin-arginine motif in their signal peptide across membranes. TatA could form the protein-conducting channel of the Tat system. The protein is Sec-independent protein translocase protein TatA of Legionella pneumophila (strain Paris).